Consider the following 164-residue polypeptide: Transcriptional repressor NrdR (164 aa).

Residues C3–C34 fold into a zinc finger. The 91-residue stretch at L49 to E139 folds into the ATP-cone domain.

This sequence belongs to the NrdR family. It depends on Zn(2+) as a cofactor.

Its function is as follows. Negatively regulates transcription of bacterial ribonucleotide reductase nrd genes and operons by binding to NrdR-boxes. The sequence is that of Transcriptional repressor NrdR from Streptococcus equi subsp. zooepidemicus (strain H70).